The following is a 234-amino-acid chain: N-acetyl-alpha-D-glucosaminyl L-malate deacetylase 1 (234 aa).

Zn(2+)-binding residues include His-12, Asp-15, and His-113.

It belongs to the PIGL family. In terms of assembly, homohexamer. Trimer of dimers. The cofactor is Zn(2+).

The enzyme catalyses (S)-malyl N-acetyl-alpha-D-glucosaminide + H2O = (S)-malyl alpha-D-glucosaminide + acetate. In terms of biological role, involved in bacillithiol (BSH) biosynthesis. Catalyzes the second step of the pathway, the deacetylation of N-acetylglucosaminylmalate (GlcNAc-Mal) to glucosamine malate (GlcN-Mal). This chain is N-acetyl-alpha-D-glucosaminyl L-malate deacetylase 1, found in Bacillus cereus (strain ATCC 14579 / DSM 31 / CCUG 7414 / JCM 2152 / NBRC 15305 / NCIMB 9373 / NCTC 2599 / NRRL B-3711).